A 412-amino-acid chain; its full sequence is Branched-chain alpha-ketoacid dehydrogenase kinase (412 aa).

The transit peptide at 1-30 directs the protein to the mitochondrion; it reads MILASVLRSGPGGGLPLRPLLGPALALRAR. Phosphoserine is present on serine 31. Serine 52 carries the post-translational modification Phosphoserine; by autocatalysis. The region spanning 159–404 is the Histidine kinase domain; the sequence is LDDHKDVVTL…DVYLRLRHID (246 aa). N6-acetyllysine is present on residues lysine 192 and lysine 233. The ATP site is built by asparagine 279 and aspartate 315. Asparagine 279 lines the Mg(2+) pocket. K(+) contacts are provided by valine 328, aspartate 330, and phenylalanine 333. ATP is bound by residues threonine 334 and threonine 335. Phosphoserine occurs at positions 356 and 360. Residues histidine 364, glycine 367, and leucine 370 each coordinate ATP. Glycine 367 is a binding site for K(+).

This sequence belongs to the PDK/BCKDK protein kinase family. As to quaternary structure, homodimer. Homotetramer. Dimerizes through interaction of two opposing nucleotide-binding domains. Interacts with E2 component of the branched-chain alpha-ketoacid dehydrogenase (BCKDH) complex. Competes with BCKDK for binding to the E2 component; this interaction is modulated by branched-chain alpha-keto acids. At steady state, BCKDH holoenzyme contains BCKDK and BCKDHA is phosphorylated. In response to high levels of branched-chain alpha-keto acids, the inhibitory BCKDK is replaced by activating PPM1K leading to BCKDHA dephosphorylation and BCAA degradation. Post-translationally, autophosphorylated. Ubiquitous.

It localises to the mitochondrion matrix. The enzyme catalyses L-seryl-[3-methyl-2-oxobutanoate dehydrogenase] + ATP = O-phospho-L-seryl-[3-methyl-2-oxobutanoate dehydrogenase] + ADP + H(+). It carries out the reaction L-seryl-[protein] + ATP = O-phospho-L-seryl-[protein] + ADP + H(+). It participates in protein modification. Its activity is regulated as follows. Allosterically inhibited by certain thiazoles and thiophenes: thiazoles increase interaction with DBT/BCKDH-E2, whereas thiophenes reduce this interaction. Inhibited by 3,6- dichlorobenzo[b]thiophene-2-carboxylic acid (BT2). The ATP binding is mediated by both potassium and magnesium ions. Its function is as follows. Serine/threonine-protein kinase component of macronutrients metabolism. Forms a functional kinase and phosphatase pair with PPM1K, serving as a metabolic regulatory node that coordinates branched-chain amino acids (BCAAs) with glucose and lipid metabolism via two distinct phosphoprotein targets: mitochondrial BCKDHA subunit of the branched-chain alpha-ketoacid dehydrogenase (BCKDH) complex and cytosolic ACLY, a lipogenic enzyme of Krebs cycle. Phosphorylates and inactivates mitochondrial BCKDH complex a multisubunit complex consisting of three multimeric components each involved in different steps of BCAA catabolism: E1 composed of BCKDHA and BCKDHB, E2 core composed of DBT monomers, and E3 composed of DLD monomers. Associates with the E2 component of BCKDH complex and phosphorylates BCKDHA on Ser-337, leading to conformational changes that interrupt substrate channeling between E1 and E2 and inactivates the BCKDH complex. Phosphorylates ACLY on Ser-455 in response to changes in cellular carbohydrate abundance such as occurs during fasting to feeding metabolic transition. Refeeding stimulates MLXIPL/ChREBP transcription factor, leading to increased BCKDK to PPM1K expression ratio, phosphorylation and activation of ACLY that ultimately results in the generation of malonyl-CoA and oxaloacetate immediate substrates of de novo lipogenesis and glucogenesis, respectively. Recognizes phosphosites having SxxE/D canonical motif. This is Branched-chain alpha-ketoacid dehydrogenase kinase from Homo sapiens (Human).